The following is a 511-amino-acid chain: 2,3-bisphosphoglycerate-independent phosphoglycerate mutase (511 aa).

Asp-12 contacts Mn(2+). Tyr-36 carries the phosphotyrosine modification. Residue Ser-62 participates in Mn(2+) binding. Ser-62 acts as the Phosphoserine intermediate in catalysis. Residues His-123, 153 to 154 (RD), Arg-185, Arg-191, 261 to 264 (RPDR), and Lys-336 contribute to the substrate site. Mn(2+) contacts are provided by Asp-403, His-407, Asp-444, His-445, and His-462.

Belongs to the BPG-independent phosphoglycerate mutase family. As to quaternary structure, monomer. Mn(2+) serves as cofactor.

It carries out the reaction (2R)-2-phosphoglycerate = (2R)-3-phosphoglycerate. It participates in carbohydrate degradation; glycolysis; pyruvate from D-glyceraldehyde 3-phosphate: step 3/5. Its activity is regulated as follows. Could be inhibited during sporulation by acidification of the forespore, thus allowing accumulation of the spore's large depot of 3-phosphoglyceric acid. Essential for rapid growth and for sporulation. Catalyzes the interconversion of 2-phosphoglycerate (2-PGA) and 3-phosphoglycerate (3-PGA). In Geobacillus stearothermophilus (Bacillus stearothermophilus), this protein is 2,3-bisphosphoglycerate-independent phosphoglycerate mutase.